The sequence spans 177 residues: GTP-dependent dephospho-CoA kinase (177 aa).

Residues Gly25, Tyr31, Asp48, Val49, Val50, Asp67, Lys69, Glu124, and Asp147 each contribute to the GTP site.

The protein belongs to the GTP-dependent DPCK family. Monomer in solution.

It carries out the reaction 3'-dephospho-CoA + GTP = GDP + CoA + H(+). It functions in the pathway cofactor biosynthesis; coenzyme A biosynthesis. In terms of biological role, catalyzes the GTP-dependent phosphorylation of the 3'-hydroxyl group of dephosphocoenzyme A to form coenzyme A (CoA). Can also use UTP, with lower efficiency and has weak activity with ATP, but shows a strong preference for GTP as the phosphate donor. The polypeptide is GTP-dependent dephospho-CoA kinase (Thermococcus kodakarensis (strain ATCC BAA-918 / JCM 12380 / KOD1) (Pyrococcus kodakaraensis (strain KOD1))).